The primary structure comprises 371 residues: Repetitive proline-rich cell wall protein 2 (371 aa).

A signal peptide spans methionine 1–alanine 22. 66 consecutive repeat copies span residues proline 32–lysine 36, proline 37–lysine 41, proline 42–lysine 46, proline 47–lysine 51, proline 52–lysine 56, proline 57–lysine 61, proline 62–lysine 66, proline 67–lysine 71, proline 72–lysine 76, proline 77–lysine 81, proline 82–lysine 86, proline 87–lysine 91, proline 92–lysine 96, proline 97–lysine 101, proline 102–lysine 106, proline 107–lysine 111, proline 112–lysine 116, proline 117–lysine 121, proline 122–lysine 126, proline 127–lysine 131, proline 132–lysine 136, proline 137–lysine 141, proline 142–lysine 146, proline 147–lysine 151, proline 152–lysine 156, proline 157–lysine 161, proline 162–lysine 166, proline 167–lysine 171, proline 172–lysine 176, proline 177–lysine 181, proline 182–lysine 186, proline 187–lysine 191, proline 192–lysine 196, proline 197–lysine 201, proline 202–lysine 206, proline 207–lysine 211, proline 212–lysine 216, proline 217–lysine 221, proline 222–lysine 226, proline 227–lysine 231, proline 232–lysine 236, proline 237–lysine 241, proline 242–lysine 246, proline 247–lysine 251, proline 252–lysine 256, proline 257–lysine 261, proline 262–lysine 266, proline 267–lysine 271, proline 272–lysine 276, proline 277–lysine 281, proline 282–lysine 286, proline 287–lysine 291, proline 292–lysine 296, proline 297–lysine 301, proline 302–lysine 306, proline 307–lysine 311, proline 312–lysine 316, proline 317–lysine 321, proline 322–lysine 326, proline 327–lysine 331, proline 332–lysine 336, proline 337–lysine 341, proline 342–lysine 346, proline 347–lysine 351, proline 352–lysine 356, and proline 357–lysine 361. The tract at residues proline 32 to glycine 366 is 67 X 5 AA approximate tandem repeats of P-P-[IV]-[EY]-K. Residues valine 49–proline 317 form a disordered region. Positions valine 339–proline 371 are disordered. One copy of the 67; approximate repeat lies at proline 362–glycine 366.

The protein belongs to the plant proline-rich protein superfamily. ENOD12 family. Expressed in hypocotyls, roots and mature root nodules.

Its subcellular location is the secreted. It localises to the cell wall. In terms of biological role, this is a developmentally regulated putative cell wall protein. The protein is Repetitive proline-rich cell wall protein 2 (PRP2) of Medicago truncatula (Barrel medic).